The following is a 263-amino-acid chain: UPF0246 protein Mmar10_0828 (263 aa).

This sequence belongs to the UPF0246 family.

The polypeptide is UPF0246 protein Mmar10_0828 (Maricaulis maris (strain MCS10) (Caulobacter maris)).